The chain runs to 381 residues: Creatine kinase B-type (381 aa).

Phosphoserine is present on serine 4. A Phosphagen kinase N-terminal domain is found at 11-98 (KLRFPAEDEF…FDPIIEDRHG (88 aa)). Threonine 35 is subject to Phosphothreonine. Lysine 45 participates in a covalent cross-link: Glycyl lysine isopeptide (Lys-Gly) (interchain with G-Cter in ubiquitin). Residue valine 72 participates in creatine binding. Positions 96–110 (RHGGYQPSDEHKTDL) are enriched in basic and acidic residues. The interval 96–122 (RHGGYQPSDEHKTDLNPDNLQGGDDLD) is disordered. Lysine 107 is covalently cross-linked (Glycyl lysine isopeptide (Lys-Gly) (interchain with G-Cter in ubiquitin)). Phosphotyrosine is present on tyrosine 125. The Phosphagen kinase C-terminal domain maps to 125–367 (YVLSSRVRTG…KLLIEMEQRL (243 aa)). Residues 128 to 132 (SSRVR), arginine 130, arginine 132, and histidine 191 contribute to the ATP site. The internal MTS-like signal stretch occupies residues 130–138 (RVRTGRSIR). The residue at position 199 (serine 199) is a Phosphoserine. Glutamate 232 contacts creatine. ATP is bound at residue arginine 236. Tyrosine 269 carries the 3'-nitrotyrosine modification. Serine 285 lines the creatine pocket. Arginine 292 is a binding site for ATP. Serine 309 is modified (phosphoserine). ATP-binding positions include arginine 320, 320 to 325 (RGTGGV), and aspartate 335. A Phosphothreonine modification is found at threonine 322. Lysine 381 participates in a covalent cross-link: Glycyl lysine isopeptide (Lys-Gly) (interchain with G-Cter in ubiquitin).

Belongs to the ATP:guanido phosphotransferase family. In terms of assembly, dimer of identical or non-identical chains, which can be either B (brain type) or M (muscle type). With MM being the major form in skeletal muscle and myocardium, MB existing in myocardium, and BB existing in many tissues, especially brain. Interacts with SLC12A6 (via C-terminus); the interaction may be required for SLC12A6 potassium-chloride cotransport activity. Post-translationally, ubiquitinated by the ECS(ASB9) complex, leading to its degradation by the proteasome. In the kidney localized primarily in the outer medulla in the thick ascending limb and distal convoluted tubule.

Its subcellular location is the cytoplasm. The protein localises to the cytosol. It localises to the mitochondrion. It is found in the cell membrane. It carries out the reaction creatine + ATP = N-phosphocreatine + ADP + H(+). Reversibly catalyzes the transfer of phosphate between ATP and various phosphogens (e.g. creatine phosphate). Creatine kinase isoenzymes play a central role in energy transduction in tissues with large, fluctuating energy demands, such as skeletal muscle, heart, brain and spermatozoa. Acts as a key regulator of adaptive thermogenesis as part of the futile creatine cycle: localizes to the mitochondria of thermogenic fat cells and acts by mediating phosphorylation of creatine to initiate a futile cycle of creatine phosphorylation and dephosphorylation. During the futile creatine cycle, creatine and N-phosphocreatine are in a futile cycle, which dissipates the high energy charge of N-phosphocreatine as heat without performing any mechanical or chemical work. The sequence is that of Creatine kinase B-type (Ckb) from Rattus norvegicus (Rat).